We begin with the raw amino-acid sequence, 438 residues long: Aspartic proteinase nepenthesin-2 (438 aa).

Residues 1-24 form the signal peptide; that stretch reads MASPLYSVVLGLAIVSAIVAPTSS. Positions 25–79 are cleaved as a propeptide — activation peptide; that stretch reads TSRGTLLHHGQKRPQPGLRVDLEQVDSGKNLTKYELIKRAIKRGERRMRSINAML. N-linked (GlcNAc...) asparagine glycosylation occurs at asparagine 54. In terms of domain architecture, Peptidase A1 spans 96–431; it reads YLMNVAIGTP…DLQNLAVSFV (336 aa). Aspartate 114 is an active-site residue. 6 disulfide bridges follow: cysteine 124-cysteine 127, cysteine 130-cysteine 204, cysteine 151-cysteine 169, cysteine 156-cysteine 164, cysteine 241-cysteine 435, and cysteine 354-cysteine 395. The active site involves aspartate 315.

The protein belongs to the peptidase A1 family.

It is found in the secreted. It catalyses the reaction Similar to pepsin, but also cleaves on either side of Asp and at Lys-|-Arg.. Its activity is regulated as follows. Inhibited by pepstatin and by diazoacetyl-D,L-norleucine methyl ester (DAN) in the presence of Cu(2+) ions. Its function is as follows. Extracellular proteinase found in the pitcher fluid of carnivorous plants. Digest prey for nitrogen uptake. The polypeptide is Aspartic proteinase nepenthesin-2 (nep2) (Nepenthes gracilis (Slender pitcher plant)).